We begin with the raw amino-acid sequence, 264 residues long: uncharacterized protein (264 aa).

The helical transmembrane segment at 9-29 threads the bilayer; the sequence is LVISILSLIATLSISFNIYFI.

It localises to the membrane. This is an uncharacterized protein from Ureaplasma parvum serovar 3 (strain ATCC 700970).